The following is a 307-amino-acid chain: Undecaprenyl-diphosphatase (307 aa).

The next 6 helical transmembrane spans lie at 40–60 (AAKT…VVYF), 79–99 (LRLA…GLLF), 107–127 (LFGP…MIGV), 183–203 (AAAA…ATVF), 219–239 (IVAL…VIAV), and 249–269 (LAPF…LWIA).

It belongs to the UppP family.

It localises to the cell inner membrane. It catalyses the reaction di-trans,octa-cis-undecaprenyl diphosphate + H2O = di-trans,octa-cis-undecaprenyl phosphate + phosphate + H(+). Its function is as follows. Catalyzes the dephosphorylation of undecaprenyl diphosphate (UPP). Confers resistance to bacitracin. The sequence is that of Undecaprenyl-diphosphatase from Sorangium cellulosum (strain So ce56) (Polyangium cellulosum (strain So ce56)).